We begin with the raw amino-acid sequence, 524 residues long: Cytochrome P450 4F3 (524 aa).

Residues 15–35 (AASPWLLLLLVGASCLLAYIL) traverse the membrane as a helical segment. Position 468 (C468) interacts with heme.

Belongs to the cytochrome P450 family. It depends on heme as a cofactor.

The protein resides in the endoplasmic reticulum membrane. It is found in the microsome membrane. It carries out the reaction leukotriene B4 + reduced [NADPH--hemoprotein reductase] + O2 = 18-hydroxy-leukotriene B4 + oxidized [NADPH--hemoprotein reductase] + H2O + H(+). It catalyses the reaction leukotriene B4 + reduced [NADPH--hemoprotein reductase] + O2 = 19-hydroxy-leukotriene B4 + oxidized [NADPH--hemoprotein reductase] + H2O + H(+). The protein operates within lipid metabolism; leukotriene B4 degradation. Functionally, a cytochrome P450 monooxygenase involved in the metabolism of the pro-inflammatory lipid mediator leukotriene B4 (LTB4). Hydroxylates at the omega-1 and omega-2 positions LTB4. This oxidation step leads to LTB4 inactivation, which is postulated to be a crucial part of the resolution of inflammation. Mechanistically, uses molecular oxygen inserting one oxygen atom into a substrate, and reducing the second into a water molecule, with two electrons provided by NADPH via cytochrome P450 reductase (CPR; NADPH-ferrihemoprotein reductase). The protein is Cytochrome P450 4F3 of Rattus norvegicus (Rat).